Reading from the N-terminus, the 250-residue chain is Putative inner dynein arm light chain, axonemal (250 aa).

Residues 168–250 (MRKALQAHEE…QLEGITAPKK (83 aa)) adopt a coiled-coil conformation.

The protein belongs to the inner dynein arm light chain family.

The protein localises to the cell projection. Its subcellular location is the cilium. The protein resides in the dynein axonemal particle. Its function is as follows. May play a dynamic role in flagellar motility. The protein is Putative inner dynein arm light chain, axonemal of Drosophila melanogaster (Fruit fly).